Here is a 126-residue protein sequence, read N- to C-terminus: Protein ApaG (126 aa).

Residues 2–126 (KQLESSIRIE…FRLAAPGLLH (125 aa)) enclose the ApaG domain.

The sequence is that of Protein ApaG from Shewanella loihica (strain ATCC BAA-1088 / PV-4).